The primary structure comprises 91 residues: Auxin-responsive protein SAUR20 (91 aa).

It belongs to the ARG7 family.

The protein localises to the cell membrane. Functions as a positive effector of cell expansion through modulation of auxin transport. The sequence is that of Auxin-responsive protein SAUR20 from Arabidopsis thaliana (Mouse-ear cress).